The chain runs to 148 residues: uncharacterized protein (148 aa).

Over residues 1 to 17 (MEGLQRSTISFRRQGSS) the composition is skewed to polar residues. Positions 1–148 (MEGLQRSTIS…SRRRIVTKKR (148 aa)) are disordered. Composition is skewed to basic and acidic residues over residues 36–47 (EQKDESQRDEQP) and 58–67 (KPIDEKDKLR). A phosphoserine mark is found at serine 100 and serine 107. The span at 128 to 148 (VNPRKRPPKRRSRRRIVTKKR) shows a compositional bias: basic residues.

This is an uncharacterized protein from Arabidopsis thaliana (Mouse-ear cress).